We begin with the raw amino-acid sequence, 550 residues long: Membrane protein insertase YidC (550 aa).

The chain crosses the membrane as a helical span at residues 3–23 (IKRTVLWVIFFMSAVMLFDNW). Residues 34-73 (FPSATQTKTAAPAAPGSSTTASQPTDLPQTTAAAPGSTTP) are disordered. The span at 35-73 (PSATQTKTAAPAAPGSSTTASQPTDLPQTTAAAPGSTTP) shows a compositional bias: low complexity. The next 4 membrane-spanning stretches (helical) occupy residues 363–383 (WGWA…PLSA), 429–449 (FGGC…YWVL), 472–492 (PYFI…KLNP), and 503–523 (MMFM…GLVL).

This sequence belongs to the OXA1/ALB3/YidC family. Type 1 subfamily. Interacts with the Sec translocase complex via SecD. Specifically interacts with transmembrane segments of nascent integral membrane proteins during membrane integration.

The protein resides in the cell inner membrane. Functionally, required for the insertion and/or proper folding and/or complex formation of integral membrane proteins into the membrane. Involved in integration of membrane proteins that insert both dependently and independently of the Sec translocase complex, as well as at least some lipoproteins. Aids folding of multispanning membrane proteins. The protein is Membrane protein insertase YidC of Paraburkholderia phymatum (strain DSM 17167 / CIP 108236 / LMG 21445 / STM815) (Burkholderia phymatum).